A 111-amino-acid chain; its full sequence is Prostate and testis expressed protein 2 (111 aa).

Positions 1-18 (MFVLVMICLFCQYWGVLN) are cleaved as a signal peptide. In terms of domain architecture, UPAR/Ly6 spans 27–108 (LLCYKCKKYH…CKHSNYCNLP (82 aa)). Cystine bridges form between Cys29–Cys55, Cys32–Cys40, Cys47–Cys78, and Cys82–Cys99.

Belongs to the PATE family. As to expression, expressed in prostate, testis, brain and lung.

Its subcellular location is the secreted. The sequence is that of Prostate and testis expressed protein 2 (Pate2) from Mus musculus (Mouse).